A 714-amino-acid chain; its full sequence is Fatty acid oxidation complex subunit alpha (714 aa).

Positions 1 to 190 (MDMTSAFTLN…KSGLVDEIVP (190 aa)) are enoyl-CoA hydratase. The segment at 306–714 (GTLDSIGILG…FWKTSATDRH (409 aa)) is 3-hydroxyacyl-CoA dehydrogenase.

In the N-terminal section; belongs to the enoyl-CoA hydratase/isomerase family. The protein in the central section; belongs to the 3-hydroxyacyl-CoA dehydrogenase family. As to quaternary structure, heterotetramer of two alpha chains (FadJ) and two beta chains (FadI).

The protein resides in the cytoplasm. The catalysed reaction is a (3S)-3-hydroxyacyl-CoA = a (2E)-enoyl-CoA + H2O. It catalyses the reaction a 4-saturated-(3S)-3-hydroxyacyl-CoA = a (3E)-enoyl-CoA + H2O. The enzyme catalyses a (3S)-3-hydroxyacyl-CoA + NAD(+) = a 3-oxoacyl-CoA + NADH + H(+). It carries out the reaction (3S)-3-hydroxybutanoyl-CoA = (3R)-3-hydroxybutanoyl-CoA. Its pathway is lipid metabolism; fatty acid beta-oxidation. In terms of biological role, catalyzes the formation of a hydroxyacyl-CoA by addition of water on enoyl-CoA. Also exhibits 3-hydroxyacyl-CoA epimerase and 3-hydroxyacyl-CoA dehydrogenase activities. The chain is Fatty acid oxidation complex subunit alpha from Escherichia fergusonii (strain ATCC 35469 / DSM 13698 / CCUG 18766 / IAM 14443 / JCM 21226 / LMG 7866 / NBRC 102419 / NCTC 12128 / CDC 0568-73).